The sequence spans 549 residues: Oxygen-dependent choline dehydrogenase (549 aa).

4–33 provides a ligand contact to FAD; sequence DFVIIGSGSAGSAMAYRLSEDGRYSVIVIE. The Proton acceptor role is filled by His465.

The protein belongs to the GMC oxidoreductase family. FAD serves as cofactor.

The enzyme catalyses choline + A = betaine aldehyde + AH2. It carries out the reaction betaine aldehyde + NAD(+) + H2O = glycine betaine + NADH + 2 H(+). The protein operates within amine and polyamine biosynthesis; betaine biosynthesis via choline pathway; betaine aldehyde from choline (cytochrome c reductase route): step 1/1. Functionally, involved in the biosynthesis of the osmoprotectant glycine betaine. Catalyzes the oxidation of choline to betaine aldehyde and betaine aldehyde to glycine betaine at the same rate. The polypeptide is Oxygen-dependent choline dehydrogenase (Brucella canis (strain ATCC 23365 / NCTC 10854 / RM-666)).